The chain runs to 325 residues: MTDVSGKIRAWGRRLLVGAAAAAALPGLVGLAGGAATAGAFSRPGLPVEYLQVPSAAMGRSIKVQFQSGGDNSPAVYLLDGLRAQDDYNGWDINTPAFEWYYQSGLSVIMPVGGQSSFYSDWYSPACGKAGCTTYKWETFLTSELPQWLSANRSVKPTGSAAVGISMAGSSALILSVYHPQQFIYAGSLSALMDPSQGMGPSLIGLAMGDAGGYKASDMWGPSSDPAWQRNDPSLHIPELVANNTRLWIYCGNGTPSELGGANVPAEFLENFVRSSNLKFQDAYNAAGGHNAVFNLDANGTHSWEYWGAQLNAMKGDLQASLGAR.

A signal peptide spans 1–40 (MTDVSGKIRAWGRRLLVGAAAAAALPGLVGLAGGAATAGA). Substrate is bound at residue 82–83 (LR). The interval 98–108 (FEWYYQSGLSV) is fibronectin-binding. A disulfide bond links Cys127 and Cys132. Substrate-binding residues include Ser166 and Asp194. The active-site Nucleophile is the Ser166. Glu270 is a catalytic residue. Substrate is bound by residues 272 to 275 (FVRS), Lys279, and 302 to 304 (HSW). Residue His302 is part of the active site.

The protein belongs to the mycobacterial A85 antigen family.

Its subcellular location is the secreted. It catalyses the reaction 2 alpha,alpha'-trehalose 6-mycolate = alpha,alpha'-trehalose 6,6'-bismycolate + alpha,alpha-trehalose. The catalysed reaction is an acyl-CoA + a 1,2-diacyl-sn-glycerol = a triacyl-sn-glycerol + CoA. In terms of biological role, the antigen 85 proteins (FbpA, FbpB, FbpC) are responsible for the high affinity of mycobacteria for fibronectin, a large adhesive glycoprotein, which facilitates the attachment of M.tuberculosis to murine alveolar macrophages (AMs). They also help to maintain the integrity of the cell wall by catalyzing the transfer of mycolic acids to cell wall arabinogalactan and through the synthesis of alpha,alpha-trehalose dimycolate (TDM, cord factor). They catalyze the transfer of a mycoloyl residue from one molecule of alpha,alpha-trehalose monomycolate (TMM) to another TMM, leading to the formation of TDM. This Mycobacterium kansasii protein is Diacylglycerol acyltransferase/mycolyltransferase Ag85B (fbpB).